Reading from the N-terminus, the 228-residue chain is NAD(P)H-hydrate epimerase (228 aa).

Positions V9–A209 constitute a YjeF N-terminal domain. N53–D57 provides a ligand contact to (6S)-NADPHX. The K(+) site is built by N54 and D115. Residues G119–P125 and D148 contribute to the (6S)-NADPHX site. S151 contributes to the K(+) binding site.

Belongs to the NnrE/AIBP family. K(+) serves as cofactor.

The enzyme catalyses (6R)-NADHX = (6S)-NADHX. The catalysed reaction is (6R)-NADPHX = (6S)-NADPHX. Functionally, catalyzes the epimerization of the S- and R-forms of NAD(P)HX, a damaged form of NAD(P)H that is a result of enzymatic or heat-dependent hydration. This is a prerequisite for the S-specific NAD(P)H-hydrate dehydratase to allow the repair of both epimers of NAD(P)HX. The polypeptide is NAD(P)H-hydrate epimerase (Bordetella pertussis (strain CS)).